Here is a 198-residue protein sequence, read N- to C-terminus: DnaJ homolog subfamily C member 12 (198 aa).

M1 carries the N-acetylmethionine modification. The 66-residue stretch at 14–79 (DYYALLGCDE…ESRARYDHWR (66 aa)) folds into the J domain. Residues 114-177 (EGSGQTFTSS…GLSDLNCGHL (64 aa)) are disordered. A compositionally biased stretch (polar residues) spans 116-125 (SGQTFTSSVP). A compositionally biased stretch (basic and acidic residues) spans 126 to 156 (NKERSEQRETKKGDPDSNPEKMKQKEPKFPE). S160, S166, and S182 each carry phosphoserine.

In terms of assembly, interacts with HSPA8. Interacts with TPH1. Interacts with TPH2. Highest levels of expression are detected in kidney, pineal gland, and raphe nuclei in the brain where it localizes to serotonerigic neurons.

Its subcellular location is the cytoplasm. Its function is as follows. Probable co-chaperone that participates in the proper folding of biopterin-dependent aromatic amino acid hydroxylases, which include phenylalanine-4-hydroxylase (PAH), tyrosine 3-monooxygenase (TH) and peripheral and neuronal tryptophan hydroxylases (TPH1 and TPH2). The chain is DnaJ homolog subfamily C member 12 (Dnajc12) from Mus musculus (Mouse).